Consider the following 845-residue polypeptide: BLOC-2 complex member HPS5 homolog (845 aa).

Residues 239 to 268 (PTEEDLEDAKSMEGSDDNDNDQRSSPSGVK) form a disordered region.

The protein belongs to the HPS5 family.

In terms of biological role, has a role in the biogenesis of eye pigment granules. Eye pigment granules are specialized forms of late endosomes or lysosomes. Biogenesis of pigment granules in the eye requires molecular components required for protein delivery to lysosomes. The sequence is that of BLOC-2 complex member HPS5 homolog from Aedes aegypti (Yellowfever mosquito).